Consider the following 383-residue polypeptide: 8-amino-7-oxononanoate synthase (383 aa).

Position 21 (R21) interacts with substrate. 108-109 (GY) serves as a coordination point for pyridoxal 5'-phosphate. H133 lines the substrate pocket. S179, H207, and T233 together coordinate pyridoxal 5'-phosphate. Position 236 is an N6-(pyridoxal phosphate)lysine (K236). T350 serves as a coordination point for substrate.

It belongs to the class-II pyridoxal-phosphate-dependent aminotransferase family. BioF subfamily. As to quaternary structure, homodimer. Pyridoxal 5'-phosphate is required as a cofactor.

The enzyme catalyses 6-carboxyhexanoyl-[ACP] + L-alanine + H(+) = (8S)-8-amino-7-oxononanoate + holo-[ACP] + CO2. It participates in cofactor biosynthesis; biotin biosynthesis. Its function is as follows. Catalyzes the decarboxylative condensation of pimeloyl-[acyl-carrier protein] and L-alanine to produce 8-amino-7-oxononanoate (AON), [acyl-carrier protein], and carbon dioxide. The chain is 8-amino-7-oxononanoate synthase from Yersinia pestis bv. Antiqua (strain Angola).